The chain runs to 442 residues: MGQVPSRRFSLFDRRSWPEARRIAEILRREAIGGGLLLAATVLALGWANSPWSESYQSMLSYQLGPSWAHLDLTLAQWAADGLLAIFFFVAGLELKREFIAGDLRDPRRAAVPVLAACGGVAVPAVLYALVNVGGDASAGWAIPTATDIAFALAVLAVIGRHLPSGLRTFLLTLAVVDDLLAIVIIAVVYTRHLSILPLLGALVPLALFTLLVQRRVRSWWLLLPLAAATWTLVHASGVHATVAGVLLGFAVPVLRGTRAGGPEAGPGLAEHFEHRWRPLSAGVAVPIFAFFSAGVTVDGLSGLSAALSDRAALGVVLGLVVGKPLGIMAATFLVARFTRATLDDGLTWTDVLGLAVLAGIGFTVSLLIGELAFGSGSARDDHVKIAVLTGSLLAALLAAVVLRLRNRVYRRLQEAETADRDHDGIPDVYQDLHRSSPRPWG.

Helical transmembrane passes span 32–52 (IGGG…NSPW), 73–93 (LTLA…VAGL), 111–131 (AVPV…YALV), 139–159 (AGWA…LAVI), 170–190 (FLLT…AVVY), 193–213 (HLSI…TLLV), 234–254 (VHAS…AVPV), 284–304 (VAVP…LSGL), 316–336 (VVLG…FLVA), 352–372 (VLGL…IGEL), and 383–403 (HVKI…AVVL). The span at 423-435 (HDGIPDVYQDLHR) shows a compositional bias: basic and acidic residues. A disordered region spans residues 423–442 (HDGIPDVYQDLHRSSPRPWG).

The protein belongs to the NhaA Na(+)/H(+) (TC 2.A.33) antiporter family.

The protein resides in the cell membrane. The catalysed reaction is Na(+)(in) + 2 H(+)(out) = Na(+)(out) + 2 H(+)(in). Functionally, na(+)/H(+) antiporter that extrudes sodium in exchange for external protons. The chain is Na(+)/H(+) antiporter NhaA from Frankia casuarinae (strain DSM 45818 / CECT 9043 / HFP020203 / CcI3).